Here is a 149-residue protein sequence, read N- to C-terminus: 3-dehydroquinate dehydratase (149 aa).

Tyr-26 (proton acceptor) is an active-site residue. Positions 78, 84, and 91 each coordinate substrate. The active-site Proton donor is the His-104. Residues 105-106 and Arg-115 contribute to the substrate site; that span reads LS.

This sequence belongs to the type-II 3-dehydroquinase family. In terms of assembly, homododecamer.

The catalysed reaction is 3-dehydroquinate = 3-dehydroshikimate + H2O. Its pathway is metabolic intermediate biosynthesis; chorismate biosynthesis; chorismate from D-erythrose 4-phosphate and phosphoenolpyruvate: step 3/7. Functionally, catalyzes a trans-dehydration via an enolate intermediate. The protein is 3-dehydroquinate dehydratase of Polynucleobacter asymbioticus (strain DSM 18221 / CIP 109841 / QLW-P1DMWA-1) (Polynucleobacter necessarius subsp. asymbioticus).